The sequence spans 256 residues: Trans-aconitate 2-methyltransferase (256 aa).

It belongs to the methyltransferase superfamily. Tam family.

The protein resides in the cytoplasm. It carries out the reaction trans-aconitate + S-adenosyl-L-methionine = (E)-3-(methoxycarbonyl)pent-2-enedioate + S-adenosyl-L-homocysteine. Its function is as follows. Catalyzes the S-adenosylmethionine monomethyl esterification of trans-aconitate. This Afipia carboxidovorans (strain ATCC 49405 / DSM 1227 / KCTC 32145 / OM5) (Oligotropha carboxidovorans) protein is Trans-aconitate 2-methyltransferase.